Reading from the N-terminus, the 375-residue chain is MDAFVVALTSVIQDSGFVAFTWGNAVMMLVGCILLYLAIVKGFEPLLLSPIAFGCILANVPRTGFETDPGVMQLILGGIKYEIFPPLIFMGVGAMTDFGPLIANPKTLLLGAAAQIGVFVALLGAMLLGFNVKEASAIGIIGGADGPTSIYLASKMAPHLLGAIAVAAYSYMSLVPLIQPPVMKLFTSKEERKIKMAQLRTVTHFEKVVFPIVTTIFISLLLPSVCSLIGMLMLGNLFTESGCMDRLSDTAQNALMNSVTIMLATGTGLTMKAESFLTLQTIEIICLGLVAFIGGTAGGVLFGKLMSKLDGGKTNPLIGSAGVSAVPMAARVSQVVGQQADPGNFLLMHAMGPNVAGVIGTAVAAGTMLAMVGGK.

Helical transmembrane passes span 16 to 39, 46 to 65, 74 to 96, 107 to 130, 137 to 153, 160 to 178, 208 to 232, 254 to 271, 284 to 302, 316 to 332, and 345 to 369; these read GFVAFTWGNAVMMLVGCILLYLAI, LLLSPIAFGCILANVPRTGF, LILGGIKYEIFPPLIFMGVGAMT, TLLLGAAAQIGVFVALLGAMLLGF, AIGIIGGADGPTSIYLA, LLGAIAVAAYSYMSLVPLI, VVFPIVTTIFISLLLPSVCSLIGML, ALMNSVTIMLATGTGLTM, IICLGLVAFIGGTAGGVLF, PLIGSAGVSAVPMAARV, and FLLMHAMGPNVAGVIGTAVAAGTML.

The protein belongs to the GcdB/MmdB/OadB family. Heterooctamer consisting of two alpha, two beta, two gamma and two delta subunits. In terms of processing, the N-terminus is blocked.

It is found in the cell membrane. The catalysed reaction is (2E)-glutaconyl-CoA + Na(+)(in) + H(+) = (2E)-butenoyl-CoA + Na(+)(out) + CO2. Its pathway is amino-acid degradation; L-glutamate degradation via hydroxyglutarate pathway; crotonoyl-CoA from L-glutamate: step 5/5. Functionally, tunnel subunit of the primary sodium pump glutaconyl-CoA decarboxylase (GCD). This chain is Glutaconyl-CoA decarboxylase subunit beta (gcdB), found in Acidaminococcus fermentans (strain ATCC 25085 / DSM 20731 / CCUG 9996 / CIP 106432 / VR4).